A 1188-amino-acid chain; its full sequence is Integrin alpha-11 (1188 aa).

An N-terminal signal peptide occupies residues 1–22 (MDLPRGLVVAWALSLWPGFTDT). Over 23–1141 (FNMDTRKPRV…ISKQEDWQVP (1119 aa)) the chain is Extracellular. FG-GAP repeat units lie at residues 24–85 (NMDT…NCTK) and 91–151 (VTLS…FSKT). Cys-76 and Cys-83 are disulfide-bonded. 2 N-linked (GlcNAc...) asparagine glycosylation sites follow: Asn-82 and Asn-95. Disulfide bonds link Cys-121–Cys-139 and Cys-129–Cys-159. The region spanning 164–345 (DIVIVLDGSN…AALKDIVDAL (182 aa)) is the VWFA domain. Asn-291, Asn-331, Asn-358, Asn-449, and Asn-462 each carry an N-linked (GlcNAc...) asparagine glycan. 5 FG-GAP repeats span residues 355 to 406 (TNKN…VIPL), 411 to 461 (LKEF…TMHN), 462 to 527 (NRSL…LFVY), 528 to 586 (NGTL…SILK), and 590 to 650 (QRIT…FEPS). Asp-488, Asp-490, Asp-492, and Asp-496 together coordinate Ca(2+). N-linked (GlcNAc...) asparagine glycosylation is present at Asn-528. Ca(2+)-binding residues include Asp-551, Asn-553, Asp-555, Asp-559, Asp-613, Asn-615, Asp-617, and Asp-621. N-linked (GlcNAc...) asparagine glycosylation is present at Asn-642. Disulfide bonds link Cys-659-Cys-668, Cys-674-Cys-729, and Cys-781-Cys-787. Asn-694 carries N-linked (GlcNAc...) asparagine glycosylation. A glycan (N-linked (GlcNAc...) asparagine) is linked at Asn-857. Cysteines 881 and 893 form a disulfide. N-linked (GlcNAc...) asparagine glycosylation is found at Asn-894, Asn-973, Asn-1031, Asn-1039, and Asn-1059. The helical transmembrane segment at 1142-1164 (IWIIVGSTLGGLLLLALLVLALW) threads the bilayer. Topologically, residues 1165-1188 (KLGFFRSARRRREPGLDPTPKVLE) are cytoplasmic.

This sequence belongs to the integrin alpha chain family. As to quaternary structure, heterodimer of an alpha and a beta subunit. Alpha-11 associates with beta-1. Interacts with RAB21. As to expression, according to PubMed:10464311, highest levels of expression in uterus and heart, intermediate levels in skeletal muscle and intermediate to low levels in pancreas, kidney and placenta. According to PubMed:10486209, also found in brain, colon, lung, small intestine, stomach, testis, salivary glands, thyroid glands and prostate. Very low levels in peripheral blood lymphocytes, fetal brain and fetal liver.

It localises to the membrane. Its function is as follows. Integrin alpha-11/beta-1 is a receptor for collagen. The polypeptide is Integrin alpha-11 (ITGA11) (Homo sapiens (Human)).